Reading from the N-terminus, the 196-residue chain is Regulator of G-protein signaling 8 (196 aa).

The residue at position 26 (Ser26) is a Phosphoserine. The RGS domain maps to 72–188; sequence SFDVLLSHKY…LRSKMYLDLL (117 aa).

Interacts with GNAO1 and GNAI3.

The protein localises to the cell membrane. It localises to the membrane. The protein resides in the perikaryon. Its subcellular location is the cell projection. It is found in the dendrite. The protein localises to the nucleus. Its function is as follows. Regulates G protein-coupled receptor signaling cascades, including signaling via muscarinic acetylcholine receptor CHRM2 and dopamine receptor DRD2. Inhibits signal transduction by increasing the GTPase activity of G protein alpha subunits, thereby driving them into their inactive GDP-bound form. Modulates the activity of potassium channels that are activated in response to DRD2 and CHRM2 signaling. This chain is Regulator of G-protein signaling 8 (RGS8), found in Macaca fascicularis (Crab-eating macaque).